We begin with the raw amino-acid sequence, 361 residues long: MFLELINFITQFDTKFNVLNYLTIRALLAMLSALFIGLMLGRIFIKRLQQCHINQVIRTDGPKSHLIKVGTPTMGGILILFAFIVSILIWGDWSNIYLWIIIVTSIIFSAIGFTDDYLKIKHKSSNGLSSSIKFLTQSLSAIVISTWIILISQKTTQPQLLIPFFNDIILPLSVFDFLILSYFVIVGSSNAVNLTDGLDGLAIMSVILISGALAIFAYFSGNYNFSNYLNMPYITGINELFIICAALIGSSLGFLWFNAYPAEIFMGDVGSLSLGAILAVIAILIRQEILLFIMGGVFVAETLSVIIQVGYYKLYKKRIFLMTPLHHHFEKQNISEPKIIVRFWIVTLILVLIGLASIKIH.

Transmembrane regions (helical) follow at residues 21 to 41 (YLTI…LMLG), 69 to 89 (VGTP…SILI), 93 to 113 (WSNI…AIGF), 131 to 151 (SIKF…IILI), 168 to 188 (IILP…IVGS), 200 to 220 (GLAI…AYFS), 240 to 260 (LFII…FNAY), 264 to 284 (IFMG…IAIL), 289 to 309 (ILLF…IIQV), and 338 to 358 (KIIV…LASI).

This sequence belongs to the glycosyltransferase 4 family. MraY subfamily. It depends on Mg(2+) as a cofactor.

The protein resides in the cell inner membrane. The catalysed reaction is UDP-N-acetyl-alpha-D-muramoyl-L-alanyl-gamma-D-glutamyl-meso-2,6-diaminopimeloyl-D-alanyl-D-alanine + di-trans,octa-cis-undecaprenyl phosphate = di-trans,octa-cis-undecaprenyl diphospho-N-acetyl-alpha-D-muramoyl-L-alanyl-D-glutamyl-meso-2,6-diaminopimeloyl-D-alanyl-D-alanine + UMP. The protein operates within cell wall biogenesis; peptidoglycan biosynthesis. In terms of biological role, catalyzes the initial step of the lipid cycle reactions in the biosynthesis of the cell wall peptidoglycan: transfers peptidoglycan precursor phospho-MurNAc-pentapeptide from UDP-MurNAc-pentapeptide onto the lipid carrier undecaprenyl phosphate, yielding undecaprenyl-pyrophosphoryl-MurNAc-pentapeptide, known as lipid I. The sequence is that of Phospho-N-acetylmuramoyl-pentapeptide-transferase from Vesicomyosocius okutanii subsp. Calyptogena okutanii (strain HA).